The chain runs to 328 residues: Tetraacyldisaccharide 4'-kinase (328 aa).

Position 55 to 62 (55 to 62 (TAGGNGKT)) interacts with ATP.

Belongs to the LpxK family.

It carries out the reaction a lipid A disaccharide + ATP = a lipid IVA + ADP + H(+). The protein operates within glycolipid biosynthesis; lipid IV(A) biosynthesis; lipid IV(A) from (3R)-3-hydroxytetradecanoyl-[acyl-carrier-protein] and UDP-N-acetyl-alpha-D-glucosamine: step 6/6. Functionally, transfers the gamma-phosphate of ATP to the 4'-position of a tetraacyldisaccharide 1-phosphate intermediate (termed DS-1-P) to form tetraacyldisaccharide 1,4'-bis-phosphate (lipid IVA). This Escherichia coli O6:K15:H31 (strain 536 / UPEC) protein is Tetraacyldisaccharide 4'-kinase.